A 1104-amino-acid chain; its full sequence is MAATAGGGPGAAAGAVGAGGAAAASGLAVYRRKDGGPASKFWESPDTVSQLDSVRVWLGKHYKKYVHADAPTNKTLAGLVVQLLQFQEDAFGKHVTNPAFTKLPAKCFMDFKAGGTLCHILGAAYKYKNEQGWRRFDLQNPSRMDRNVEMFMNIEKTLVQNNCLTRPNIYLIPDIDLKLANKLKDIIKRHQGTFTDEKSKASHHIYPYPSSQEDEEWLRPVMRRDKQVLVHWGFYPDSYDTWVHSNDVDAEIEDAPIPEKPWKVHVKWILDTDVFNEWMNEEDYEVDENRKPVSFRQRISTKNEEPVRSPERRDRKASANSRKRKPSPSPPPPTATESRKKSGKKGQASLYGKRRSQKEEDEQEDLTKDMEDPTPVPNIEEVVLPKNVNPKKDSENTPVKGGTVADLDEQDEEAVTTGGKEDEDPSKGDPSRSVDPGEDNVTEQTNHIIIPSYASWFDYNCIHVIERRALPEFFNGKNKSKTPEIYLAYRNFMIDTYRLNPQEYLTSTACRRNLTGDVCAVMRVHAFLEQWGLVNYQVDPESRPMAMGPPPTPHFNVLADTPSGLVPLHLRSPQVPAAQQMLNFPEKNKEKPIDLQNFGLRTDIYSKKTLAKSKGASAGREWTEQETLLLLEALEMYKDDWNKVSEHVGSRTQDECILHFLRLPIEDPYLENSDASLGPLAYQPVPFSQSGNPVMSTVAFLASVVDPRVASAAAKAALEEFSRVREEVPLELVEAHVKKVQEAARASGKVDPTYGLESSCIAGTGPDEPEKLEGSEEEKMETDPDGQQPEKAENKVENESDEGDKIQDRENEKNTEKEQDSDVSEDVKPEEKENEENKELTDTCKERESDAGKKKVEHEISEGNVATAAAAALASAATKAKHLAAVEERKIKSLVALLVETQMKKLEIKLRHFEELETIMDREKEALEQQRQQLLTERQNFHMEQLKYAELRARQQMEQQQQHGQTPQQAHQHTGGPGMAPLGATGHPGMMPHQQPPPYPLMHHQMPPPHPPQPGQIPGPGSMMPGQPMPGRMIPAVAANIHPTGSGPTPPGMPPMPGNILGPRVPLTAPNGMYPPPPQQQQPPPPADGVPPPPAPGPPASATP.

The interval Leu27–Thr301 is marR-like, BRCT and chromo domains module. Positions Pro37 to Cys163 constitute a MarR-like domain. One can recognise a BRCT; N-terminus domain in the interval Pro167–Ser210. A Glycyl lysine isopeptide (Lys-Gly) (interchain with G-Cter in SUMO2) cross-link involves residue Lys178. In terms of domain architecture, Chromo spans Glu216 to His244. One can recognise a BRCT; C-terminus domain in the interval Lys260–Tyr284. Positions Phe295 to Thr445 are disordered. Over residues Thr301 to Ala317 the composition is skewed to basic and acidic residues. A phosphoserine mark is found at Ser309, Ser327, and Ser329. Phosphothreonine is present on Thr334. Residues Lys344 and Lys345 each carry the N6-acetyllysine modification. The residue at position 349 (Ser349) is a Phosphoserine. An N6-acetyllysine modification is found at Lys353. Ser356 is subject to Phosphoserine. An N6-acetyllysine; alternate modification is found at Lys358. A Glycyl lysine isopeptide (Lys-Gly) (interchain with G-Cter in SUMO2); alternate cross-link involves residue Lys358. At Thr397 the chain carries Phosphothreonine. The region spanning Ile448 to Met545 is the SWIRM domain. Ser572 is subject to Phosphoserine. A Glycyl lysine isopeptide (Lys-Gly) (interchain with G-Cter in SUMO2) cross-link involves residue Lys591. Residues Ser617–Pro668 form the SANT domain. Lys738 is covalently cross-linked (Glycyl lysine isopeptide (Lys-Gly) (interchain with G-Cter in SUMO2)). Residues Ala744–Glu859 form a disordered region. At Ser775 the chain carries Phosphoserine. The span at Ser775 to Pro784 shows a compositional bias: acidic residues. A compositionally biased stretch (basic and acidic residues) spans Gln788–Glu859. Lys795 is covalently cross-linked (Glycyl lysine isopeptide (Lys-Gly) (interchain with G-Cter in SUMO2)). Ser821 and Ser824 each carry phosphoserine. Residues Lys828 and Lys855 each participate in a glycyl lysine isopeptide (Lys-Gly) (interchain with G-Cter in SUMO2) cross-link. The stretch at Lys909–Gln945 forms a coiled coil. Lys947 bears the N6-acetyllysine mark. Disordered regions lie at residues Gln955 to Gly1021 and Ile1041 to Pro1104. Residues Gln956–His973 show a composition bias toward low complexity. Pro residues-rich tracts occupy residues Gln994 to Ile1017 and Pro1048 to Pro1057. At Arg1064 the chain carries Asymmetric dimethylarginine. Over residues Met1073–Pro1104 the composition is skewed to pro residues.

This sequence belongs to the SMARCC family. As to quaternary structure, component of the multiprotein chromatin-remodeling complexes SWI/SNF: SWI/SNF-A (BAF), SWI/SNF-B (PBAF) and related complexes. The canonical complex contains a catalytic subunit (either SMARCA4/BRG1/BAF190A or SMARCA2/BRM/BAF190B) and at least SMARCE1, ACTL6A/BAF53, SMARCC1/BAF155, SMARCC2/BAF170, and SMARCB1/SNF5/BAF47. Other subunits specific to each of the complexes may also be present permitting several possible combinations developmentally and tissue specific. Component of the BAF complex, which includes at least actin (ACTB), ARID1A/BAF250A, ARID1B/BAF250B, SMARCA2/BRM, SMARCA4/BRG1, ACTL6A/BAF53, ACTL6B/BAF53B, SMARCE1/BAF57, SMARCC1/BAF155, SMARCC2/BAF170, SMARCB1/SNF5/INI1, and one or more SMARCD1/BAF60A, SMARCD2/BAF60B, or SMARCD3/BAF60C. In muscle cells, the BAF complex also contains DPF3. Component of neural progenitors-specific chromatin remodeling complex (npBAF complex) composed of at least, ARID1A/BAF250A or ARID1B/BAF250B, SMARCD1/BAF60A, SMARCD3/BAF60C, SMARCA2/BRM/BAF190B, SMARCA4/BRG1/BAF190A, SMARCB1/BAF47, SMARCC1/BAF155, SMARCE1/BAF57, SMARCC2/BAF170, PHF10/BAF45A, ACTL6A/BAF53A and actin. Component of neuron-specific chromatin remodeling complex (nBAF complex) composed of at least, ARID1A/BAF250A or ARID1B/BAF250B, SMARCD1/BAF60A, SMARCD3/BAF60C, SMARCA2/BRM/BAF190B, SMARCA4/BRG1/BAF190A, SMARCB1/BAF47, SMARCC1/BAF155, SMARCE1/BAF57, SMARCC2/BAF170, DPF1/BAF45B, DPF3/BAF45C, ACTL6B/BAF53B and actin. Component of the SWI/SNF-B (PBAF) chromatin remodeling complex, at least composed of SMARCA4/BRG1, SMARCB1/BAF47/SNF5, ACTL6A/BAF53A or ACTL6B/BAF53B, SMARCE1/BAF57, SMARCD1/BAF60A, SMARCD2/BAF60B, perhaps SMARCD3/BAF60C, SMARCC1/BAF155, SMARCC2/BAF170, PBRM1/BAF180, ARID2/BAF200 and actin. Component of SWI/SNF (GBAF) subcomplex, which includes at least BICRA or BICRAL (mutually exclusive), BRD9, SS18, SMARCA2/BRM, SMARCA4/BRG1/BAF190A, ACTL6A/BAF53, SMARCC1/BAF155, and SMARCD1/BAF60A. May also interact with the SIN3A histone deacetylase transcription repressor complex in conjunction with SMARCA2 and SMARCA4. The minimal complex composed of SMARCC1 and SMARCA4 seems to be able to associate with cyclin such as CCNE1 or transcription factors such as KLF1 or GATA1. Interacts with NR3C1 and SMARD1. Interacts with TRIP12; leading to disrupt interaction between TRIP12 and SMARCE1 and prevent SMARCE1 ubiquitination. Interacts with CEBPB (when not methylated). Interacts with KDM6B. Interacts with MKKS; the interaction takes place predominantly in the cytoplasm and may modulate SMARCC1 location. Interacts with DPF2. Interacts with PRDM1/BLIMP1. Interacts with DPF3a (isoform 2 of DPF3/BAF45C) and with HDGFL2 in a DPF3a-dependent manner. As to expression, highly expressed in adult brain, testis and thymus.

Its subcellular location is the nucleus. The protein resides in the cytoplasm. Involved in transcriptional activation and repression of select genes by chromatin remodeling (alteration of DNA-nucleosome topology). Component of SWI/SNF chromatin remodeling complexes that carry out key enzymatic activities, changing chromatin structure by altering DNA-histone contacts within a nucleosome in an ATP-dependent manner. May stimulate the ATPase activity of the catalytic subunit of the complex. Belongs to the neural progenitors-specific chromatin remodeling complex (npBAF complex) and the neuron-specific chromatin remodeling complex (nBAF complex). During neural development a switch from a stem/progenitor to a postmitotic chromatin remodeling mechanism occurs as neurons exit the cell cycle and become committed to their adult state. The transition from proliferating neural stem/progenitor cells to postmitotic neurons requires a switch in subunit composition of the npBAF and nBAF complexes. As neural progenitors exit mitosis and differentiate into neurons, npBAF complexes which contain ACTL6A/BAF53A and PHF10/BAF45A, are exchanged for homologous alternative ACTL6B/BAF53B and DPF1/BAF45B or DPF3/BAF45C subunits in neuron-specific complexes (nBAF). The npBAF complex is essential for the self-renewal/proliferative capacity of the multipotent neural stem cells. The nBAF complex along with CREST plays a role regulating the activity of genes essential for dendrite growth. The sequence is that of SWI/SNF complex subunit SMARCC1 (Smarcc1) from Mus musculus (Mouse).